The following is a 76-amino-acid chain: Translation initiation factor IF-1 (76 aa).

Residues 1-72 (MAKKDVVVMQ…NKGRIVKREK (72 aa)) enclose the S1-like domain.

Belongs to the IF-1 family. Component of the 30S ribosomal translation pre-initiation complex which assembles on the 30S ribosome in the order IF-2 and IF-3, IF-1 and N-formylmethionyl-tRNA(fMet); mRNA recruitment can occur at any time during PIC assembly.

The protein localises to the cytoplasm. Functionally, one of the essential components for the initiation of protein synthesis. Stabilizes the binding of IF-2 and IF-3 on the 30S subunit to which N-formylmethionyl-tRNA(fMet) subsequently binds. Helps modulate mRNA selection, yielding the 30S pre-initiation complex (PIC). Upon addition of the 50S ribosomal subunit IF-1, IF-2 and IF-3 are released leaving the mature 70S translation initiation complex. This chain is Translation initiation factor IF-1, found in Petrotoga mobilis (strain DSM 10674 / SJ95).